The sequence spans 347 residues: Haptoglobin (347 aa).

A signal peptide spans 1–18 (MRALGAVVTLLLWGQLFA). Residues 31-88 (DSCPKPPEIANGYVEHLVRYRCRQFYRLRAEGDGVYTLNDEKQWVNTVAGEKLPECEA) form the Sushi domain. Intrachain disulfides connect C52/C86, C90/C207, C250/C281, and C292/C322. The region spanning 103-345 (IIGGSMDAKG…LKDWVQETMA (243 aa)) is the Peptidase S1 domain. N-linked (GlcNAc...) asparagine glycans are attached at residues N148, N182, N256, and N264. The tract at residues 259-264 (VPEKKN) is interaction with CD163.

This sequence belongs to the peptidase S1 family. Tetramer of two alpha and two beta chains; disulfide-linked. The hemoglobin/haptoglobin complex is composed of a haptoglobin dimer bound to two hemoglobin alpha-beta dimers. Interacts with CD163. Interacts with ERGIC3. In terms of tissue distribution, expressed by the liver and secreted in plasma.

Its subcellular location is the secreted. Its function is as follows. As a result of hemolysis, hemoglobin is found to accumulate in the kidney and is secreted in the urine. Haptoglobin captures, and combines with free plasma hemoglobin to allow hepatic recycling of heme iron and to prevent kidney damage. Haptoglobin also acts as an antioxidant, has antibacterial activity and plays a role in modulating many aspects of the acute phase response. Hemoglobin/haptoglobin complexes are rapidly cleared by the macrophage CD163 scavenger receptor expressed on the surface of liver Kupfer cells through an endocytic lysosomal degradation pathway. The polypeptide is Haptoglobin (Hp) (Mus musculus (Mouse)).